A 260-amino-acid polypeptide reads, in one-letter code: ATP synthase subunit a (260 aa).

Positions 1–11 are cleaved as a propeptide — removed in mature form; it reads MQNTLLRTYIN. The next 6 helical transmembrane spans lie at 37–57, 96–116, 126–146, 152–172, 192–212, and 217–237; these read ITTF…LYVL, YFPF…ISMI, FVFI…LSLF, FFSL…LVVI, IFSG…FVQI, and LILG…EFGI.

This sequence belongs to the ATPase A chain family. In terms of assembly, F-type ATPases have 2 components, CF(1) - the catalytic core - and CF(0) - the membrane proton channel. CF(1) has five subunits: alpha(3), beta(3), gamma(1), delta(1), epsilon(1). CF(0) has three main subunits: a, b and c.

It is found in the mitochondrion inner membrane. Mitochondrial membrane ATP synthase (F(1)F(0) ATP synthase or Complex V) produces ATP from ADP in the presence of a proton gradient across the membrane which is generated by electron transport complexes of the respiratory chain. F-type ATPases consist of two structural domains, F(1) - containing the extramembraneous catalytic core and F(0) - containing the membrane proton channel, linked together by a central stalk and a peripheral stalk. During catalysis, ATP synthesis in the catalytic domain of F(1) is coupled via a rotary mechanism of the central stalk subunits to proton translocation. Key component of the proton channel; it may play a direct role in the translocation of protons across the membrane. The sequence is that of ATP synthase subunit a (ATP6) from Candida glabrata (strain ATCC 2001 / BCRC 20586 / JCM 3761 / NBRC 0622 / NRRL Y-65 / CBS 138) (Yeast).